The primary structure comprises 97 residues: Integration host factor subunit alpha (97 aa).

Residues 49 to 71 (FGNFDLRDKNQRPGRNPKTGEDI) form a disordered region.

Belongs to the bacterial histone-like protein family. Heterodimer of an alpha and a beta chain.

This protein is one of the two subunits of integration host factor, a specific DNA-binding protein that functions in genetic recombination as well as in transcriptional and translational control. This chain is Integration host factor subunit alpha, found in Shewanella woodyi (strain ATCC 51908 / MS32).